Here is a 351-residue protein sequence, read N- to C-terminus: Phosphatidylinositol transfer protein PDR16 (351 aa).

The region spanning 135–295 (LVAVENESGK…LYGGDLKFKY (161 aa)) is the CRAL-TRIO domain.

Homodimer. Apo-SFH3 forms a dimer through the hydrophobic interaction of gating helices. Binding of phosphatidylinositol leads to dissociation of the dimer into monomers in a reversible manner.

Its subcellular location is the lipid droplet. It localises to the microsome membrane. The protein localises to the endoplasmic reticulum membrane. It catalyses the reaction a 1,2-diacyl-sn-glycero-3-phospho-(1D-myo-inositol)(in) = a 1,2-diacyl-sn-glycero-3-phospho-(1D-myo-inositol)(out). Has phosphatidylinositol transfer activity. Involved in the regulation of the phospholipid composition of plasma- and endomembranes. Altering plasma membrane composition may provide a possible mechanism for multidrug resistance. Involved in the regulation of sterol biosynthesis. Contributes to efficient phospholipase D1 activation in the regulation of phospholipid turnover. Regulates the release of fatty acids from lipid droplets. The sequence is that of Phosphatidylinositol transfer protein PDR16 (PDR16) from Saccharomyces cerevisiae (strain ATCC 204508 / S288c) (Baker's yeast).